The following is a 389-amino-acid chain: Chalcone synthase 1 (389 aa).

The active site involves Cys164.

This sequence belongs to the thiolase-like superfamily. Chalcone/stilbene synthases family.

It carries out the reaction (E)-4-coumaroyl-CoA + 3 malonyl-CoA + 3 H(+) = 2',4,4',6'-tetrahydroxychalcone + 3 CO2 + 4 CoA. It functions in the pathway secondary metabolite biosynthesis; flavonoid biosynthesis. Its function is as follows. The primary product of this enzyme is 4,2',4',6'-tetrahydroxychalcone (also termed naringenin-chalcone or chalcone) which can under specific conditions spontaneously isomerize into naringenin. The chain is Chalcone synthase 1 (CHS1) from Camellia sinensis (Tea plant).